The following is a 90-amino-acid chain: N(2)-fixation sustaining protein CowN (90 aa).

This sequence belongs to the CowN family.

Functionally, is required to sustain N(2)-dependent growth in the presence of low levels of carbon monoxide (CO). Probably acts by protecting the N(2) fixation ability of the nitrogenase complex, which is inactivated in the presence of CO. The protein is N(2)-fixation sustaining protein CowN of Halorhodospira halophila (strain DSM 244 / SL1) (Ectothiorhodospira halophila (strain DSM 244 / SL1)).